Reading from the N-terminus, the 195-residue chain is Holliday junction branch migration complex subunit RuvA (195 aa).

The interval 1 to 61 (MYEYLDGVVV…ENDQTLYGFK (61 aa)) is domain I. Residues 62-139 (KAEDKELFLN…AVENEVGTLF (78 aa)) form a domain II region. The flexible linker stretch occupies residues 139–143 (FDLST). Residues 144–195 (TSNQALDEALEALIALGYSEKEVKKLTKKLSEQTDRTTDQYISSGLKLLMKG) are domain III.

This sequence belongs to the RuvA family. In terms of assembly, homotetramer. Forms an RuvA(8)-RuvB(12)-Holliday junction (HJ) complex. HJ DNA is sandwiched between 2 RuvA tetramers; dsDNA enters through RuvA and exits via RuvB. An RuvB hexamer assembles on each DNA strand where it exits the tetramer. Each RuvB hexamer is contacted by two RuvA subunits (via domain III) on 2 adjacent RuvB subunits; this complex drives branch migration. In the full resolvosome a probable DNA-RuvA(4)-RuvB(12)-RuvC(2) complex forms which resolves the HJ.

It is found in the cytoplasm. In terms of biological role, the RuvA-RuvB-RuvC complex processes Holliday junction (HJ) DNA during genetic recombination and DNA repair, while the RuvA-RuvB complex plays an important role in the rescue of blocked DNA replication forks via replication fork reversal (RFR). RuvA specifically binds to HJ cruciform DNA, conferring on it an open structure. The RuvB hexamer acts as an ATP-dependent pump, pulling dsDNA into and through the RuvAB complex. HJ branch migration allows RuvC to scan DNA until it finds its consensus sequence, where it cleaves and resolves the cruciform DNA. The protein is Holliday junction branch migration complex subunit RuvA of Pediococcus pentosaceus (strain ATCC 25745 / CCUG 21536 / LMG 10740 / 183-1w).